Reading from the N-terminus, the 895-residue chain is Collagen alpha-1(I) chain (895 aa).

The segment at 1–895 is disordered; the sequence is GPMGPSGPRG…PGPIGPPGPR (895 aa). Positions 20–39 are enriched in low complexity; sequence PQGFQGPPGEPGEPGASGPM. The span at 51–65 shows a compositional bias: basic and acidic residues; it reads NGDDGEAGKPGRPGE. A Phosphoserine modification is found at Ser90. Composition is skewed to low complexity over residues 98–114 and 137–150; these read DAGP…PGEN and PAGA…TGAA. Pro residues predominate over residues 152 to 164; the sequence is PPGPTGPAGPPGF. 6 stretches are compositionally biased toward low complexity: residues 198 to 237, 302 to 336, 348 to 374, 383 to 399, 553 to 564, and 575 to 593; these read AGAA…RGPS, ERGF…PGEA, KGIT…QDGR, ARGQ…KGAA, TGPSGPAGPTGA, and AGFA…KGDA. Ser556 carries the phosphoserine modification. Residues 595–607 are compositionally biased toward pro residues; the sequence is PPGPAGPAGPPGP. Composition is skewed to low complexity over residues 608–635, 660–669, and 679–703; these read IGSV…AGRV, ETGPAGRPGE, and AGEK…QGIA. Over residues 741 to 751 the composition is skewed to pro residues; sequence PPGPVGPPGIA. The segment covering 753-768 has biased composition (low complexity); sequence PPGESGREGSPGAEGS. A compositionally biased stretch (pro residues) spans 787–802; sequence AGPPGAPGAPGAPGPV. Composition is skewed to low complexity over residues 823-838 and 853-886; these read IGPV…QGPR and PGEQ…NGIP.

It belongs to the fibrillar collagen family. In terms of assembly, trimers of one alpha 2(I) and two alpha 1(I) chains. Post-translationally, prolines at the third position of the tripeptide repeating unit (G-X-Y) are hydroxylated in some or all of the chains. In terms of tissue distribution, forms the fibrils of tendon, ligaments and bones. In bones, the fibrils are mineralized with calcium hydroxyapatite.

It localises to the secreted. It is found in the extracellular space. The protein localises to the extracellular matrix. Its function is as follows. Type I collagen is a member of group I collagen (fibrillar forming collagen). This Equus sp protein is Collagen alpha-1(I) chain.